A 264-amino-acid polypeptide reads, in one-letter code: Dehydrodolichyl diphosphate synthase complex subunit SPAC4D7.04c (264 aa).

This sequence belongs to the UPP synthase family. Forms an active dehydrodolichyl diphosphate synthase complex with nus1. Requires Mg(2+) as cofactor.

The protein resides in the endoplasmic reticulum membrane. It carries out the reaction n isopentenyl diphosphate + (2E,6E)-farnesyl diphosphate = a di-trans,poly-cis-polyprenyl diphosphate + n diphosphate. It participates in protein modification; protein glycosylation. With nus1, forms the dehydrodolichyl diphosphate synthase (DDS) complex, an essential component of the dolichol monophosphate (Dol-P) biosynthetic machinery. Adds multiple copies of isopentenyl pyrophosphate (IPP) to farnesyl pyrophosphate (FPP) to produce dehydrodolichyl diphosphate (Dedol-PP), a precursor of dolichol which is utilized as a sugar carrier in protein glycosylation in the endoplasmic reticulum (ER). The protein is Dehydrodolichyl diphosphate synthase complex subunit SPAC4D7.04c of Schizosaccharomyces pombe (strain 972 / ATCC 24843) (Fission yeast).